The following is a 161-amino-acid chain: 2-C-methyl-D-erythritol 2,4-cyclodiphosphate synthase (161 aa).

2 residues coordinate a divalent metal cation: aspartate 8 and histidine 10. 4-CDP-2-C-methyl-D-erythritol 2-phosphate contacts are provided by residues 8-10 (DVH) and 34-35 (HS). Histidine 42 serves as a coordination point for a divalent metal cation. 4-CDP-2-C-methyl-D-erythritol 2-phosphate is bound by residues 56 to 58 (DIG), 61 to 65 (FPDTD), 100 to 106 (AQSPKMA), 132 to 135 (TTEE), and phenylalanine 139.

This sequence belongs to the IspF family. Homotrimer. A divalent metal cation is required as a cofactor.

The catalysed reaction is 4-CDP-2-C-methyl-D-erythritol 2-phosphate = 2-C-methyl-D-erythritol 2,4-cyclic diphosphate + CMP. It functions in the pathway isoprenoid biosynthesis; isopentenyl diphosphate biosynthesis via DXP pathway; isopentenyl diphosphate from 1-deoxy-D-xylulose 5-phosphate: step 4/6. Involved in the biosynthesis of isopentenyl diphosphate (IPP) and dimethylallyl diphosphate (DMAPP), two major building blocks of isoprenoid compounds. Catalyzes the conversion of 4-diphosphocytidyl-2-C-methyl-D-erythritol 2-phosphate (CDP-ME2P) to 2-C-methyl-D-erythritol 2,4-cyclodiphosphate (ME-CPP) with a corresponding release of cytidine 5-monophosphate (CMP). The sequence is that of 2-C-methyl-D-erythritol 2,4-cyclodiphosphate synthase from Clostridioides difficile (strain 630) (Peptoclostridium difficile).